A 365-amino-acid chain; its full sequence is Probable galacturonosyltransferase-like 10 (365 aa).

Over 1 to 10 (MMSGSRLASR) the chain is Cytoplasmic. The helical; Signal-anchor for type II membrane protein transmembrane segment at 11-31 (LIIIFSIISTSFFTVESIRLF) threads the bilayer. At 32–365 (PDSFDDASSD…LQYNQELEIL (334 aa)) the chain is on the lumenal side. A glycan (N-linked (GlcNAc...) asparagine) is linked at Asn-209.

It belongs to the glycosyltransferase 8 family.

The protein resides in the golgi apparatus membrane. It functions in the pathway glycan metabolism; pectin biosynthesis. May be involved in pectin and/or xylans biosynthesis in cell walls. This is Probable galacturonosyltransferase-like 10 (GATL10) from Arabidopsis thaliana (Mouse-ear cress).